Here is a 1367-residue protein sequence, read N- to C-terminus: Probable serine/threonine-protein kinase pkgA (1367 aa).

Disordered regions lie at residues 140–164 (IDENNNNNNNNNNNNNNNNNKNKTI), 264–429 (KNGK…LLSR), 456–556 (PTPL…SRKP), and 771–792 (PREEELSQTPLGGRLRSDSDPV). Positions 143 to 162 (NNNNNNNNNNNNNNNNNKNK) are enriched in low complexity. A compositionally biased stretch (pro residues) spans 271–282 (IKRPSPPLPPPQ). Over residues 287–326 (EQQKEQKEQQKEQQKEQQKEQQKEQEQKQQEPQKYVKFEI) the composition is skewed to basic and acidic residues. The span at 340–381 (ISSSNISNEISKQQQQQQQQQQQQQQQQQQQQQQQQQQQQQQ) shows a compositional bias: low complexity. A compositionally biased stretch (polar residues) spans 399-421 (ANNNILTTPLSSQPTQSLETPST). Positions 506–517 (GEDEEEDEDDDN) are enriched in acidic residues. A compositionally biased stretch (basic residues) spans 531–544 (LKNKRPFKKTHVHH). In terms of domain architecture, Protein kinase spans 810-1236 (FEFIKPITKG…AEEIKSHPFF (427 aa)). ATP is bound by residues 816–824 (ITKGGYGKV) and K839. Residue D933 is the Proton acceptor of the active site. 3 disordered regions span residues 971–1034 (FSPT…PSNT), 1084–1134 (FIPP…HNIH), and 1288–1312 (QNQNKESSTILTTSPPSTSSTTATA). The span at 979 to 1015 (NNQSSSSSSVSNIGGSNTIGSNISSTNNNNNNNNTTG) shows a compositional bias: low complexity. The segment covering 1025–1034 (NTETPIPSNT) has biased composition (polar residues). Composition is skewed to low complexity over residues 1092–1125 (QQPISNIPTTTTTTTTTTTGQQSQQQSQQQQQTT) and 1294–1312 (SSTILTTSPPSTSSTTATA). In terms of domain architecture, AGC-kinase C-terminal spans 1237–1347 (KSINWKTILT…VNFQSLLELN (111 aa)).

This sequence belongs to the protein kinase superfamily. AGC Ser/Thr protein kinase family.

It catalyses the reaction L-seryl-[protein] + ATP = O-phospho-L-seryl-[protein] + ADP + H(+). It carries out the reaction L-threonyl-[protein] + ATP = O-phospho-L-threonyl-[protein] + ADP + H(+). The polypeptide is Probable serine/threonine-protein kinase pkgA (pkgA) (Dictyostelium discoideum (Social amoeba)).